A 211-amino-acid polypeptide reads, in one-letter code: Thiamine-phosphate synthase (211 aa).

4-amino-2-methyl-5-(diphosphooxymethyl)pyrimidine contacts are provided by residues 37 to 41 and Asn69; that span reads QLRIK. Positions 70 and 89 each coordinate Mg(2+). Ser108 contacts 4-amino-2-methyl-5-(diphosphooxymethyl)pyrimidine. 134–136 lines the 2-[(2R,5Z)-2-carboxy-4-methylthiazol-5(2H)-ylidene]ethyl phosphate pocket; that stretch reads TQT. Position 137 (Lys137) interacts with 4-amino-2-methyl-5-(diphosphooxymethyl)pyrimidine. Residues Gly166 and 186-187 each bind 2-[(2R,5Z)-2-carboxy-4-methylthiazol-5(2H)-ylidene]ethyl phosphate; that span reads VS.

This sequence belongs to the thiamine-phosphate synthase family. It depends on Mg(2+) as a cofactor.

It carries out the reaction 2-[(2R,5Z)-2-carboxy-4-methylthiazol-5(2H)-ylidene]ethyl phosphate + 4-amino-2-methyl-5-(diphosphooxymethyl)pyrimidine + 2 H(+) = thiamine phosphate + CO2 + diphosphate. The enzyme catalyses 2-(2-carboxy-4-methylthiazol-5-yl)ethyl phosphate + 4-amino-2-methyl-5-(diphosphooxymethyl)pyrimidine + 2 H(+) = thiamine phosphate + CO2 + diphosphate. The catalysed reaction is 4-methyl-5-(2-phosphooxyethyl)-thiazole + 4-amino-2-methyl-5-(diphosphooxymethyl)pyrimidine + H(+) = thiamine phosphate + diphosphate. It functions in the pathway cofactor biosynthesis; thiamine diphosphate biosynthesis; thiamine phosphate from 4-amino-2-methyl-5-diphosphomethylpyrimidine and 4-methyl-5-(2-phosphoethyl)-thiazole: step 1/1. In terms of biological role, condenses 4-methyl-5-(beta-hydroxyethyl)thiazole monophosphate (THZ-P) and 2-methyl-4-amino-5-hydroxymethyl pyrimidine pyrophosphate (HMP-PP) to form thiamine monophosphate (TMP). The protein is Thiamine-phosphate synthase of Salmonella paratyphi B (strain ATCC BAA-1250 / SPB7).